The primary structure comprises 462 residues: tRNA(Ile2) 2-agmatinylcytidine synthetase TiaS (462 aa).

Belongs to the TiaS family.

It localises to the cytoplasm. It carries out the reaction cytidine(34) in tRNA(Ile2) + agmatine + ATP + H2O = 2-agmatinylcytidine(34) in tRNA(Ile2) + AMP + 2 phosphate + 2 H(+). ATP-dependent agmatine transferase that catalyzes the formation of 2-agmatinylcytidine (agm2C) at the wobble position (C34) of tRNA(Ile2), converting the codon specificity from AUG to AUA. This Haloquadratum walsbyi (strain DSM 16790 / HBSQ001) protein is tRNA(Ile2) 2-agmatinylcytidine synthetase TiaS.